We begin with the raw amino-acid sequence, 105 residues long: Large ribosomal subunit protein eL30 (105 aa).

Belongs to the eukaryotic ribosomal protein eL30 family.

In Methanococcus vannielii (strain ATCC 35089 / DSM 1224 / JCM 13029 / OCM 148 / SB), this protein is Large ribosomal subunit protein eL30 (rpl30e).